A 367-amino-acid polypeptide reads, in one-letter code: NAD(P)H-quinone oxidoreductase subunit 1, chloroplastic (367 aa).

8 consecutive transmembrane segments (helical) span residues 29–49 (WIPL…LVVV), 96–116 (VLLF…SYLI), 128–148 (INLG…GLLM), 176–196 (LALC…IDIV), 204–224 (ILGW…IAAL), 266–286 (LVSA…PIPI), 304–324 (VISA…FLFL), and 347–367 (FLLP…IALL).

This sequence belongs to the complex I subunit 1 family. NDH is composed of at least 16 different subunits, 5 of which are encoded in the nucleus.

The protein localises to the plastid. It is found in the chloroplast thylakoid membrane. The catalysed reaction is a plastoquinone + NADH + (n+1) H(+)(in) = a plastoquinol + NAD(+) + n H(+)(out). It catalyses the reaction a plastoquinone + NADPH + (n+1) H(+)(in) = a plastoquinol + NADP(+) + n H(+)(out). Its function is as follows. NDH shuttles electrons from NAD(P)H:plastoquinone, via FMN and iron-sulfur (Fe-S) centers, to quinones in the photosynthetic chain and possibly in a chloroplast respiratory chain. The immediate electron acceptor for the enzyme in this species is believed to be plastoquinone. Couples the redox reaction to proton translocation, and thus conserves the redox energy in a proton gradient. This chain is NAD(P)H-quinone oxidoreductase subunit 1, chloroplastic, found in Mesostigma viride (Green alga).